The sequence spans 165 residues: Destrin (165 aa).

Ala-2 carries the post-translational modification N-acetylalanine. Ser-3 is subject to Phosphoserine. Residues 4-153 form the ADF-H domain; sequence GVQVADEVCR…NRTSIAEKLG (150 aa). Lys-19 carries the post-translational modification N6-acetyllysine. The Nuclear localization signal signature appears at 30–34; the sequence is KKRKK.

This sequence belongs to the actin-binding proteins ADF family. ISGylated.

In terms of biological role, actin-depolymerizing protein. Severs actin filaments (F-actin) and binds to actin monomers (G-actin). Acts in a pH-independent manner. This Rattus norvegicus (Rat) protein is Destrin (Dstn).